The primary structure comprises 741 residues: Polyribonucleotide nucleotidyltransferase (741 aa).

Mg(2+) contacts are provided by aspartate 489 and aspartate 495. Residues 556 to 615 (PKIDSIQIPVDKIKVVIGKGGETIDKIIAETGVTIDIDEEGLVQIFSSDQDAIDRAKTII) form the KH domain. In terms of domain architecture, S1 motif spans 625 to 693 (GEVYTVPVVR…EKGRVDASIK (69 aa)). Positions 696–741 (LPKPEKNEDGENGEEHRHCCCSHHKPDHHSESMEAPKKSDESETKE) are disordered. 2 stretches are compositionally biased toward basic and acidic residues: residues 698–713 (KPEK…EHRH) and 723–741 (HHSE…ETKE).

This sequence belongs to the polyribonucleotide nucleotidyltransferase family. The cofactor is Mg(2+).

It localises to the cytoplasm. The enzyme catalyses RNA(n+1) + phosphate = RNA(n) + a ribonucleoside 5'-diphosphate. In terms of biological role, involved in mRNA degradation. Catalyzes the phosphorolysis of single-stranded polyribonucleotides processively in the 3'- to 5'-direction. This Streptococcus thermophilus (strain ATCC BAA-491 / LMD-9) protein is Polyribonucleotide nucleotidyltransferase.